A 213-amino-acid chain; its full sequence is MKTMILLLCLLGSAQSLPKQLNPASGVPATKPTPGQVTPLPQQQPNQVFPSISLIPLTQLLTLGSDLPLFNPAAGPHGAHTLPFTLGPLNGQQQLQPQMLPIIVAQLGAQGALLSSEELPLASQIFTGLLIHPLFPGAIPPSGQAGTKPDVQNGVLPTRQAGAKAVNQGTTPGHVTTPGVTDDDDYEMSTPAGLRRATHTTEGTTIDPPNRTQ.

A signal peptide spans 1-16 (MKTMILLLCLLGSAQS). Disordered regions lie at residues 22-43 (NPAS…LPQQ) and 162-213 (GAKA…NRTQ). Polar residues predominate over residues 33–43 (TPGQVTPLPQQ). Residues 169-180 (GTTPGHVTTPGV) are compositionally biased toward low complexity.

This sequence belongs to the amelotin family. Phosphorylated by FAM20C in vitro. In terms of processing, O-glycosylated. In terms of tissue distribution, specifically expressed in maturation-stage ameloblasts.

It localises to the secreted. Its function is as follows. Is a promoter of calcium phosphate mineralization, playing a critical role in the formation of the compact, mineralized, aprismatic enamel surface layer during the maturation stage of amelogenesis. This Mus musculus (Mouse) protein is Amelotin (Amtn).